We begin with the raw amino-acid sequence, 172 residues long: Shikimate kinase (172 aa).

14–19 (GAGKST) contributes to the ATP binding site. S18 is a Mg(2+) binding site. Substrate contacts are provided by D36, R60, and G82. R120 is an ATP binding site. Position 140 (R140) interacts with substrate. Q157 contacts ATP.

It belongs to the shikimate kinase family. As to quaternary structure, monomer. Requires Mg(2+) as cofactor.

It is found in the cytoplasm. The catalysed reaction is shikimate + ATP = 3-phosphoshikimate + ADP + H(+). The protein operates within metabolic intermediate biosynthesis; chorismate biosynthesis; chorismate from D-erythrose 4-phosphate and phosphoenolpyruvate: step 5/7. In terms of biological role, catalyzes the specific phosphorylation of the 3-hydroxyl group of shikimic acid using ATP as a cosubstrate. This Pseudoalteromonas translucida (strain TAC 125) protein is Shikimate kinase.